The sequence spans 607 residues: UvrABC system protein C (607 aa).

The GIY-YIG domain maps to 16 to 94; the sequence is HLPGVYRHLD…IKSLRPRYNI (79 aa). The 36-residue stretch at 203–238 folds into the UVR domain; the sequence is REVMDEIEARMQQASGELRFEEAAVLRDQMGSLSKV.

It belongs to the UvrC family. As to quaternary structure, interacts with UvrB in an incision complex.

It is found in the cytoplasm. In terms of biological role, the UvrABC repair system catalyzes the recognition and processing of DNA lesions. UvrC both incises the 5' and 3' sides of the lesion. The N-terminal half is responsible for the 3' incision and the C-terminal half is responsible for the 5' incision. This is UvrABC system protein C from Bordetella avium (strain 197N).